Here is a 471-residue protein sequence, read N- to C-terminus: V-type ATP synthase beta chain (471 aa).

This sequence belongs to the ATPase alpha/beta chains family.

In terms of biological role, produces ATP from ADP in the presence of a proton gradient across the membrane. The V-type beta chain is a regulatory subunit. The polypeptide is V-type ATP synthase beta chain (atpB) (Deinococcus radiodurans (strain ATCC 13939 / DSM 20539 / JCM 16871 / CCUG 27074 / LMG 4051 / NBRC 15346 / NCIMB 9279 / VKM B-1422 / R1)).